Consider the following 134-residue polypeptide: Transmembrane protein 100 (134 aa).

Residue Ser-15 is modified to Phosphoserine. The next 2 membrane-spanning stretches (helical) occupy residues 56-76 (CVIPFAVVVLITGTVVTAVAY) and 84-104 (IISILGLVLLSLGLFLLASSA). The residue at position 121 (Ser-121) is a Phosphoserine.

In terms of assembly, interacts (via C-terminus) with TRPA1 and TRPV1. Interacts with TASOR.

Its subcellular location is the cell membrane. It localises to the membrane. The protein localises to the perikaryon. The protein resides in the cytoplasm. It is found in the perinuclear region. Its subcellular location is the endoplasmic reticulum. Its function is as follows. Plays a role during embryonic arterial endothelium differentiation and vascular morphogenesis through the ACVRL1 receptor-dependent signaling pathway upon stimulation by bone morphogenetic proteins, such as GDF2/BMP9 and BMP10. Involved in the regulation of nociception, acting as a modulator of the interaction between TRPA1 and TRPV1, two molecular sensors and mediators of pain signals in dorsal root ganglia (DRG) neurons. Mechanistically, it weakens their interaction, thereby releasing the inhibition of TRPA1 by TRPV1 and increasing the single-channel open probability of the TRPA1-TRPV1 complex. The protein is Transmembrane protein 100 (TMEM100) of Bos taurus (Bovine).